We begin with the raw amino-acid sequence, 202 residues long: MSRYRGPRVKIIRRLGALPGLTNKTLKSKPGYINQSTSNKKVSQYRIRLEEKQKLRFHYGLTERQLLKYVRIARKAKGSTGQVLLQLLEMRLDNIIFRLGMAPTIPGARQLVNHRHILINNSTVDIPSYNCKPKDVITIKDRPKSQSIITKNLNSFQKQKIPNHLTFDLMQVKGLVNQIIDREWIFLKINELLVVEYYSRQV.

Residues 90 to 154 (MRLDNIIFRL…SQSIITKNLN (65 aa)) enclose the S4 RNA-binding domain.

Belongs to the universal ribosomal protein uS4 family. In terms of assembly, part of the 30S ribosomal subunit. Contacts protein S5. The interaction surface between S4 and S5 is involved in control of translational fidelity.

It is found in the plastid. It localises to the chloroplast. In terms of biological role, one of the primary rRNA binding proteins, it binds directly to 16S rRNA where it nucleates assembly of the body of the 30S subunit. Functionally, with S5 and S12 plays an important role in translational accuracy. The sequence is that of Small ribosomal subunit protein uS4c (rps4) from Ricciocarpos natans (Liverwort).